The chain runs to 1117 residues: DNA-directed RNA polymerase subunit beta (1117 aa).

A disordered region spans residues 1094–1117 (QLARRTPPRPTYESLSRESLDDDE). A compositionally biased stretch (basic and acidic residues) spans 1108–1117 (LSRESLDDDE).

Belongs to the RNA polymerase beta chain family. In cyanobacteria the RNAP catalytic core is composed of 2 alpha, 1 beta, 1 beta', 1 gamma and 1 omega subunit. When a sigma factor is associated with the core the holoenzyme is formed, which can initiate transcription.

It carries out the reaction RNA(n) + a ribonucleoside 5'-triphosphate = RNA(n+1) + diphosphate. DNA-dependent RNA polymerase catalyzes the transcription of DNA into RNA using the four ribonucleoside triphosphates as substrates. The protein is DNA-directed RNA polymerase subunit beta of Trichormus variabilis (strain ATCC 29413 / PCC 7937) (Anabaena variabilis).